Reading from the N-terminus, the 143-residue chain is Large ribosomal subunit protein uL15 (143 aa).

The disordered stretch occupies residues Met-1–His-58. Residues Arg-21–Gly-31 show a composition bias toward gly residues.

It belongs to the universal ribosomal protein uL15 family. In terms of assembly, part of the 50S ribosomal subunit.

Binds to the 23S rRNA. This chain is Large ribosomal subunit protein uL15, found in Ectopseudomonas mendocina (strain ymp) (Pseudomonas mendocina).